The chain runs to 588 residues: 3-methylmercaptopropionyl-CoA dehydrogenase (588 aa).

Glutamate 435 acts as the Proton acceptor in catalysis.

Belongs to the acyl-CoA dehydrogenase family. The cofactor is FAD.

It carries out the reaction 3-(methylsulfanyl)propanoyl-CoA + oxidized [electron-transfer flavoprotein] + H(+) = 3-(methylsulfanyl)acryloyl-CoA + reduced [electron-transfer flavoprotein]. In terms of biological role, involved in the assimilation of dimethylsulphoniopropionate (DMSP), an important compound in the fixation of carbon in marine phytoplankton, by mediating the conversion of 3-(methylthio)propanoyl-CoA (MMPA-CoA) to 3-(methylthio)acryloyl-CoA (MTA-CoA). This is 3-methylmercaptopropionyl-CoA dehydrogenase from Ruegeria pomeroyi (strain ATCC 700808 / DSM 15171 / DSS-3) (Silicibacter pomeroyi).